Reading from the N-terminus, the 215-residue chain is MSKVYDWFEERLEIQAIADDITSKYVPPHVNIFYCLGGITLTCFLVQVATGFAMTFYYRPTVTEAFSSVQYIMTEANFGWLIRSVHRWSASMMVLMMILHVFRVYLTGGFKKPRELTWVTGVVLAVLTASFGVTGYSLPWDQIGYWAVKIVTGVPEAIPVIGSPLVELLRGSASVGQSTLTRFYSLHTFVLPLLTAVFMLMHFPMIRKQGISGPL.

Residues 32-52 form a helical membrane-spanning segment; sequence IFYCLGGITLTCFLVQVATGF. Cys-35 contributes to the heme c binding site. Heme b-binding residues include His-86 and His-100. A run of 3 helical transmembrane segments spans residues 90–110, 116–136, and 186–206; these read ASMM…TGGF, LTWV…VTGY, and LHTF…FPMI. His-187 and His-202 together coordinate heme b.

Belongs to the cytochrome b family. PetB subfamily. As to quaternary structure, the 4 large subunits of the cytochrome b6-f complex are cytochrome b6, subunit IV (17 kDa polypeptide, PetD), cytochrome f and the Rieske protein, while the 4 small subunits are PetG, PetL, PetM and PetN. The complex functions as a dimer. Heme b serves as cofactor. The cofactor is heme c.

It localises to the plastid. Its subcellular location is the chloroplast thylakoid membrane. Its function is as follows. Component of the cytochrome b6-f complex, which mediates electron transfer between photosystem II (PSII) and photosystem I (PSI), cyclic electron flow around PSI, and state transitions. The sequence is that of Cytochrome b6 from Saccharum hybrid (Sugarcane).